A 519-amino-acid polypeptide reads, in one-letter code: Sodium-dependent dicarboxylate transporter SdcS (519 aa).

14 helical membrane passes run 29-49 (VGQL…LLLF), 59-79 (VFVL…AIPI), 103-123 (AQYG…AIAM), 136-156 (IINT…IATG), 159-179 (SMFV…LAII), 201-221 (ALVL…LIGT), 241-261 (FAKW…LVWI), 297-317 (KVVL…EFLL), 322-342 (FTSE…LFLI), 362-382 (LPWG…GISE), 395-415 (LIEG…VLFL), 428-448 (ILPI…LLMV), 451-471 (AMAA…AIVF), and 490-510 (LLSI…VLGI).

This sequence belongs to the SLC13A/DASS transporter (TC 2.A.47) family. NADC subfamily.

The protein resides in the cell membrane. Mediates the transport of dicarboxylates across the cytoplasmic membrane via a Na(+)-electrochemical gradient. The chain is Sodium-dependent dicarboxylate transporter SdcS (sdcS) from Staphylococcus saprophyticus subsp. saprophyticus (strain ATCC 15305 / DSM 20229 / NCIMB 8711 / NCTC 7292 / S-41).